The following is a 148-amino-acid chain: MRKRDRHQLIKKMITEEKLSTQKEIQDRLEAHNVCVTQTTLSRDLREIGLTKVKKNDMVYYVLVNETEKIDLVEFLSHHLEGVARAEFTLVLHTKLGEASVLANIVDVNKDEWILGTVAGANTLLVICRDQHVAKLMEDRLLDLMKDK.

The protein belongs to the ArgR family.

The protein localises to the cytoplasm. It functions in the pathway amino-acid biosynthesis; L-arginine biosynthesis [regulation]. Its function is as follows. Regulates arginine biosynthesis genes. The polypeptide is Arginine repressor (argR) (Streptococcus pneumoniae serotype 4 (strain ATCC BAA-334 / TIGR4)).